The primary structure comprises 313 residues: tRNA uridine(34) hydroxylase (313 aa).

The Rhodanese domain maps to 124–218; sequence SDPEVLLIDT…YLEEVPQQES (95 aa). Cys-178 functions as the Cysteine persulfide intermediate in the catalytic mechanism.

It belongs to the TrhO family.

The enzyme catalyses uridine(34) in tRNA + AH2 + O2 = 5-hydroxyuridine(34) in tRNA + A + H2O. Functionally, catalyzes oxygen-dependent 5-hydroxyuridine (ho5U) modification at position 34 in tRNAs. The polypeptide is tRNA uridine(34) hydroxylase (Pseudomonas fluorescens (strain ATCC BAA-477 / NRRL B-23932 / Pf-5)).